A 722-amino-acid chain; its full sequence is MSPVEITGADAVVTPPMRGRVPLPPPPPPPMRRSAPSPPPMSGRVPPPPPPPPMFDPKGAGRVICCLRPGQNKSSLKRFQCGKLTNAWEELQRHGEAQTAPEFDLSEIEALFSAAVQNQADKSGSRREAFEANPDKLQLISGADALVPLPPPPPPMPRRSPPPPPPRFDAFDHKGARMVCGFRCPVTKRSSLKPLHWVKITRALQGSLWDELQIQYGESQTAIELDVPEIETLFSVGAKPRPKPKPEKVPLIDLKRANNTIVNLKILKMPLPDMMAAVMAMDESVLDVDQIENLIQLCPTKEEMELLKNYTGDKATLGKSEQCLLELMKVPRFEAKLRVLSFKIPFGTKITKFRKMLNVVNSACEEVRSSQMLKEIMKIILFLGNTLNQGTARGSAVGFRLDSLLILSETRADNNKMTLMHYLCKVLASKAADLLDFHKDLQSLESTLEINLKSLAEEIHAITKGLEKLKQELTASETDGPVSQVFRKLLKDFISSAETQVATVSTLYSSARINADALAHYFGEDPNHYPFEKVSATLLSFIRLFKKAHQENVKQEDLEKKKAATEDVFGGPDHNIDSDTSLDDSEAKSPSRIRPPPSIPRPPSRPRYACCRIPAVNPPPRLVCGPYPLPRLVRVGSPSPPPPSMSGGAPPPPPPPPMLVASRTAPPPHLSHVRSIPFQTRLVMGTSPLPLLVREGAPPPTLPSMSGGAPPPPPPLPMLRYQ.

Disordered stretches follow at residues 1 to 56 (MSPV…PMFD), 564 to 606 (ATED…PSRP), 635 to 672 (VGSPSPPPPSMSGGAPPPPPPPPMLVASRTAPPPHLSH), and 690 to 722 (PLLVREGAPPPTLPSMSGGAPPPPPPLPMLRYQ). The span at 22–55 (PLPPPPPPPMRRSAPSPPPMSGRVPPPPPPPPMF) shows a compositional bias: pro residues. Positions 182-571 (FRCPVTKRSS…KAATEDVFGG (390 aa)) constitute an FH2 domain. Composition is skewed to pro residues over residues 593–605 (IRPPPSIPRPPSR), 638–658 (PSPPPPSMSGGAPPPPPPPPM), and 709–722 (APPPPPPLPMLRYQ).

This sequence belongs to the formin-like family. Class-II subfamily.

This chain is Formin-like protein 16 (FH16), found in Arabidopsis thaliana (Mouse-ear cress).